A 290-amino-acid polypeptide reads, in one-letter code: 4-hydroxybenzoate octaprenyltransferase (290 aa).

The next 8 helical transmembrane spans lie at 23–43 (IGALLLLWPTLWALWVATPGV), 46–66 (LWILAVFVAGVWLMRAAGCVV), 99–119 (LFVVLVLISFLLVLTLNTMTI), 141–161 (LPQVVLGAAFGWSIPMAFAAV), 163–183 (ESVPLSCWLMFLANILWAVAY), 213–233 (LIIGILQIGVLALMAIIGELN), 234–254 (GLGWGYYWSILVAGALFVYQQ), and 268–288 (AFMNNNYVGLVLFLGLAMSYW).

This sequence belongs to the UbiA prenyltransferase family. It depends on Mg(2+) as a cofactor.

It is found in the cell inner membrane. The enzyme catalyses all-trans-octaprenyl diphosphate + 4-hydroxybenzoate = 4-hydroxy-3-(all-trans-octaprenyl)benzoate + diphosphate. It functions in the pathway cofactor biosynthesis; ubiquinone biosynthesis. In terms of biological role, catalyzes the prenylation of para-hydroxybenzoate (PHB) with an all-trans polyprenyl group. Mediates the second step in the final reaction sequence of ubiquinone-8 (UQ-8) biosynthesis, which is the condensation of the polyisoprenoid side chain with PHB, generating the first membrane-bound Q intermediate 3-octaprenyl-4-hydroxybenzoate. This chain is 4-hydroxybenzoate octaprenyltransferase, found in Escherichia coli O6:K15:H31 (strain 536 / UPEC).